Here is a 397-residue protein sequence, read N- to C-terminus: pH-sensitive adenylate cyclase MT1302 (397 aa).

The interval 1-191 (MTDHVREADD…IQDMLFMQLR (191 aa)) is regulatory domain. Residues 192–206 (HMMETEAVNAGERAA) are linker. Positions 211 to 397 (PGARQVTVAF…QDDDLAGSSP (187 aa)) are catalytic domain. The Guanylate cyclase domain maps to 217 to 325 (TVAFADLVGF…SPVNVASRVT (109 aa)). Aspartate 222 provides a ligand contact to Mn(2+). Lysine 261 serves as a coordination point for substrate. Aspartate 265 contributes to the Mn(2+) binding site. Arginine 298 provides a ligand contact to ATP. Substrate is bound at residue aspartate 312.

The protein belongs to the adenylyl cyclase class-4/guanylyl cyclase family. Homodimer. It depends on Mn(2+) as a cofactor. Requires Mg(2+) as cofactor.

The enzyme catalyses ATP = 3',5'-cyclic AMP + diphosphate. Catalyzes the formation of the second messenger cAMP. The sequence is that of pH-sensitive adenylate cyclase MT1302 from Mycobacterium tuberculosis (strain CDC 1551 / Oshkosh).